The following is a 239-amino-acid chain: RNA polymerase sigma-35 factor (239 aa).

A propeptide spanning residues 1 to 27 (MMKLKFYLVYLWYKVLLKLGIKTDEIY) is cleaved from the precursor. Residues 86-99 (DLISIGTIGLIKAV) carry the Polymerase core binding motif. Residues 206-225 (QKDVADMLGISQSYISRLEK) constitute a DNA-binding region (H-T-H motif).

It belongs to the sigma-70 factor family. Proteolytically cleaved in the N-terminus probably by a SpoIIGA homolog to yield the active peptide.

In terms of biological role, sigma factors are initiation factors that promote the attachment of RNA polymerase to specific initiation sites and are then released. This sigma factor directs the transcription of crystal protein genes, a sporulation-regulated event. The polypeptide is RNA polymerase sigma-35 factor (sigE) (Bacillus anthracis).